The chain runs to 463 residues: Type IV secretion system protein PtlD homolog (463 aa).

An N-terminal signal peptide occupies residues 1–24; sequence MAGLSRILLSCTLACLLAGQAAQA. The next 5 helical transmembrane spans lie at 118-138, 232-252, 253-273, 294-314, and 333-353; these read LQPLVYSMMTLLVLLTGYALL, WLLCAMIVATSAGGWLCLAAS, LLIVPGLIVTLLLSLGPLFLV, ALVFMALGTPAVGLLSDVLAG, and MLAATLCATATLMLLTLVPLA. Positions 376–410 are enriched in low complexity; the sequence is AHRQAAARQYAPRPAAAAAAAGPHQAGTYAASATP. Residues 376 to 463 are disordered; the sequence is AHRQAAARQY…RVLPRKPNLP (88 aa). Pro residues predominate over residues 411–420; it reads APAPARPAPS. The span at 441 to 455 shows a compositional bias: basic and acidic residues; sequence VRRDDRPAPAPDRRV.

The protein localises to the cell membrane. The chain is Type IV secretion system protein PtlD homolog (ptlD) from Bordetella parapertussis (strain 12822 / ATCC BAA-587 / NCTC 13253).